The following is a 496-amino-acid chain: Glutamyl-tRNA(Gln) amidotransferase subunit A, mitochondrial (496 aa).

Catalysis depends on charge relay system residues Lys-75 and Ser-162. Ser-186 functions as the Acyl-ester intermediate in the catalytic mechanism.

Belongs to the amidase family. GatA subfamily. Subunit of the heterotrimeric GatCAB amidotransferase (AdT) complex, composed of A, B and C subunits.

Its subcellular location is the mitochondrion. The catalysed reaction is L-glutamyl-tRNA(Gln) + L-glutamine + ATP + H2O = L-glutaminyl-tRNA(Gln) + L-glutamate + ADP + phosphate + H(+). Its function is as follows. Allows the formation of correctly charged Gln-tRNA(Gln) through the transamidation of misacylated Glu-tRNA(Gln) in the mitochondria. The reaction takes place in the presence of glutamine and ATP through an activated gamma-phospho-Glu-tRNA(Gln). The protein is Glutamyl-tRNA(Gln) amidotransferase subunit A, mitochondrial of Pediculus humanus subsp. corporis (Body louse).